A 155-amino-acid chain; its full sequence is MSRRGTTEEKTAKSDPIYRNRLVNMLVNRILKHGKKSLAYQIIYRAVKKIQQKTETNPLSVLRQAIRGVTPDIAVKARRVGGSTHQVPIEIGSTQGKALAIRWLLWASRKRPGRNMAFKLSSELVDAAKGSGDAIRKKEETHRMAEANRAFAHFR.

This sequence belongs to the universal ribosomal protein uS7 family. In terms of assembly, part of the 30S ribosomal subunit.

Its subcellular location is the plastid. It is found in the chloroplast. Functionally, one of the primary rRNA binding proteins, it binds directly to 16S rRNA where it nucleates assembly of the head domain of the 30S subunit. In Saururus cernuus (Lizard's tail), this protein is Small ribosomal subunit protein uS7c (rps7).